Consider the following 286-residue polypeptide: NADPH-dependent 7-cyano-7-deazaguanine reductase (286 aa).

A substrate-binding site is contributed by 92-94; it reads IES. 94–95 lines the NADPH pocket; it reads SK. Cysteine 194 functions as the Thioimide intermediate in the catalytic mechanism. Catalysis depends on aspartate 201, which acts as the Proton donor. A substrate-binding site is contributed by 233 to 234; it reads HE. An NADPH-binding site is contributed by 262–263; the sequence is RG.

This sequence belongs to the GTP cyclohydrolase I family. QueF type 2 subfamily. Homodimer.

The protein localises to the cytoplasm. It catalyses the reaction 7-aminomethyl-7-carbaguanine + 2 NADP(+) = 7-cyano-7-deazaguanine + 2 NADPH + 3 H(+). The protein operates within tRNA modification; tRNA-queuosine biosynthesis. Its function is as follows. Catalyzes the NADPH-dependent reduction of 7-cyano-7-deazaguanine (preQ0) to 7-aminomethyl-7-deazaguanine (preQ1). The protein is NADPH-dependent 7-cyano-7-deazaguanine reductase of Shewanella sp. (strain MR-4).